A 251-amino-acid polypeptide reads, in one-letter code: MTIQLINESSNTEKFQQICDKWRLVHDRSAILALVLTDERLELRKLDEPKLGAIAVNFVDGTMAHRRKFGGGRGEAVAKAVGIKGDYLPTIIDATAGLGRDAFVLASVGCKVLLVERNPIVAALLEDGLVRAYADPEIGAFMQERMILADVRNISLLDVAQQAADVVYLDPMYPHKQKSALVKKEMRVFQHLVGADLDSDNFFVPAKALARKRVVVKRPDYAPFLAEQKPDFSQTTKNHRFDVYLSHLKSA.

Residues 100–101 (RD), 116–117 (ER), and Asp170 each bind S-adenosyl-L-methionine.

It belongs to the methyltransferase superfamily. RsmJ family.

The protein resides in the cytoplasm. The enzyme catalyses guanosine(1516) in 16S rRNA + S-adenosyl-L-methionine = N(2)-methylguanosine(1516) in 16S rRNA + S-adenosyl-L-homocysteine + H(+). Functionally, specifically methylates the guanosine in position 1516 of 16S rRNA. This is Ribosomal RNA small subunit methyltransferase J from Actinobacillus pleuropneumoniae serotype 5b (strain L20).